A 2696-amino-acid chain; its full sequence is Histone-lysine N-methyltransferase, H3 lysine-36 specific (2696 aa).

Ser-117 carries the phosphoserine modification. 2 disordered regions span residues 207-252 and 281-311; these read MGSE…EKAA and DPDS…PFCQ. Over residues 236–248 the composition is skewed to basic and acidic residues; it reads QKNKQRNEVDGSN. Polar residues-rich tracts occupy residues 281 to 290 and 297 to 306; these read DPDSSTSTLG and GTSSSSTSQE. Residues 323 to 388 enclose the PWWP 1 domain; it reads VGDLIWAKFK…AGKAIVMFEG (66 aa). 2 positions are modified to phosphoserine: Ser-483 and Ser-486. Positions 487-514 are disordered; that stretch reads ADEKEKPCAKSRARKSSDNPKRTSVKKG. The residue at position 766 (Ser-766) is a Phosphoserine. The interval 872 to 891 is disordered; that stretch reads LGEDVSDSGTSKPSKPLLFS. A Glycyl lysine isopeptide (Lys-Gly) (interchain with G-Cter in SUMO2) cross-link involves residue Lys-906. Disordered regions lie at residues 936-1035, 1067-1093, 1112-1134, 1243-1272, 1294-1344, 1382-1428, and 1480-1534; these read YRSP…DAFS, VLQG…PLQI, SKVK…NGKG, SIGD…SEKK, PKKK…EPPV, SPRP…KKGD, and KMQC…MQGE. The span at 948–961 shows a compositional bias: low complexity; it reads SPVGVSKVLVSGGS. Positions 971 to 982 are enriched in polar residues; it reads GTQNSANPSPSG. 3 stretches are compositionally biased toward basic and acidic residues: residues 1000–1017, 1070–1090, and 1112–1124; these read SDKR…DCVT, GDRE…KEDP, and SKVK…KISE. The segment covering 1300–1314 has biased composition (basic and acidic residues); it reads KVQEQVHKVSSRCEE. Over residues 1323–1337 the composition is skewed to polar residues; that stretch reads SSAQNKQVDENSLIS. A Glycyl lysine isopeptide (Lys-Gly) (interchain with G-Cter in SUMO2) cross-link involves residue Lys-1339. Ser-1510 carries the post-translational modification Phosphoserine. Positions 1513–1523 are enriched in basic and acidic residues; that stretch reads ETVEEGVEHDP. 3 consecutive PHD-type zinc fingers follow at residues 1543 to 1589, 1590 to 1646, and 1707 to 1751; these read ENVC…CRTG, IHTC…CHAA, and VSWC…CKAG. The PWWP 2 domain maps to 1756–1818; it reads YREIVWVKVG…QARVFPYMEG (63 aa). In terms of domain architecture, AWS spans 1890–1940; the sequence is SEIPRCNCKATDENPCGIDSECINRMLLYECHPTVCPAGGRCQNQCFSKRQ. The region spanning 1942 to 2059 is the SET domain; it reads PEVEIFRTLQ…AGTELTFNYN (118 aa). S-adenosyl-L-methionine is bound by residues 1952-1954, 1994-1997, 2020-2021, Asn-2065, and Lys-2071; these read RGW, TNFY, and NH. The tract at residues 2060 to 2066 is inhibits enzyme activity in the absence of bound histone; sequence LECLGNG. A Post-SET domain is found at 2066–2082; the sequence is GKTVCKCGAPNCSGFLG. A disordered region spans residues 2091-2111; it reads ATEEKSKKFKKKQQGKRRTQG. Over residues 2097–2108 the composition is skewed to basic residues; that stretch reads KKFKKKQQGKRR. The PHD-type 4; atypical zinc finger occupies 2118-2165; the sequence is EDECFSCGDAGQLVSCKKPGCPKVYHADCLNLTKRPAGKWECPWHQCD. A disordered region spans residues 2213-2422; that stretch reads LEPGEIREYV…SLSQRLPPPE (210 aa). The span at 2222–2232 shows a compositional bias: pro residues; that stretch reads VPPPVPLPPGP. Over residues 2281-2298 the composition is skewed to basic and acidic residues; the sequence is RPLERTDSRPQPLDKVRD. Residues 2303–2314 are compositionally biased toward polar residues; the sequence is GTKSQSLVSSQR. A compositionally biased stretch (low complexity) spans 2330–2348; the sequence is SDKPSPVTSPSSSPSVRSQ. Position 2369 is a phosphoserine (Ser-2369). 2 stretches are compositionally biased toward polar residues: residues 2371–2381 and 2394–2404; these read RPQSLEKTSVP and ITSSPKPQTSD. A Phosphothreonine modification is found at Thr-2462. Disordered stretches follow at residues 2464-2499, 2553-2575, 2595-2616, and 2665-2696; these read RQKE…GLGH, TQAS…QSPG, KSGQ…EEKK, and LGRG…SEQK. The residue at position 2471 (Ser-2471) is a Phosphoserine. A Glycyl lysine isopeptide (Lys-Gly) (interchain with G-Cter in SUMO2) cross-link involves residue Lys-2616. Polar residues predominate over residues 2674–2686; it reads EQNTLPALNQAPS.

This sequence belongs to the class V-like SAM-binding methyltransferase superfamily. As to quaternary structure, interacts with the ligand-binding domains of RARA and THRA in the absence of ligand; in the presence of ligand the interaction is severely disrupted but some binding still occurs. Interacts with the ligand-binding domains of RXRA and ESRRA only in the presence of ligand. Interacts with ZNF496. Interacts with AR DNA- and ligand-binding domains. As to expression, expressed in the fetal/adult brain, kidney, skeletal muscle, spleen, and the thymus, and faintly in the lung.

Its subcellular location is the nucleus. It is found in the chromosome. The catalysed reaction is L-lysyl(36)-[histone H3] + 2 S-adenosyl-L-methionine = N(6),N(6)-dimethyl-L-lysyl(36)-[histone H3] + 2 S-adenosyl-L-homocysteine + 2 H(+). In terms of biological role, histone methyltransferase that dimethylates Lys-36 of histone H3 (H3K36me2). Transcriptional intermediary factor capable of both negatively or positively influencing transcription, depending on the cellular context. The sequence is that of Histone-lysine N-methyltransferase, H3 lysine-36 specific (NSD1) from Homo sapiens (Human).